Reading from the N-terminus, the 509-residue chain is ATP synthase subunit alpha (509 aa).

169–176 (GDRQTGKT) serves as a coordination point for ATP.

Belongs to the ATPase alpha/beta chains family. F-type ATPases have 2 components, CF(1) - the catalytic core - and CF(0) - the membrane proton channel. CF(1) has five subunits: alpha(3), beta(3), gamma(1), delta(1), epsilon(1). CF(0) has four main subunits: a(1), b(1), b'(1) and c(9-12).

It is found in the cell inner membrane. The catalysed reaction is ATP + H2O + 4 H(+)(in) = ADP + phosphate + 5 H(+)(out). Functionally, produces ATP from ADP in the presence of a proton gradient across the membrane. The alpha chain is a regulatory subunit. The protein is ATP synthase subunit alpha of Bradyrhizobium sp. (strain BTAi1 / ATCC BAA-1182).